We begin with the raw amino-acid sequence, 313 residues long: Aspartate carbamoyltransferase catalytic subunit (313 aa).

2 residues coordinate carbamoyl phosphate: arginine 58 and threonine 59. Position 86 (lysine 86) interacts with L-aspartate. The carbamoyl phosphate site is built by arginine 108, histidine 136, and glutamine 139. L-aspartate-binding residues include arginine 169 and arginine 223. Positions 264 and 265 each coordinate carbamoyl phosphate.

The protein belongs to the aspartate/ornithine carbamoyltransferase superfamily. ATCase family. Heterododecamer (2C3:3R2) of six catalytic PyrB chains organized as two trimers (C3), and six regulatory PyrI chains organized as three dimers (R2).

The enzyme catalyses carbamoyl phosphate + L-aspartate = N-carbamoyl-L-aspartate + phosphate + H(+). It participates in pyrimidine metabolism; UMP biosynthesis via de novo pathway; (S)-dihydroorotate from bicarbonate: step 2/3. Catalyzes the condensation of carbamoyl phosphate and aspartate to form carbamoyl aspartate and inorganic phosphate, the committed step in the de novo pyrimidine nucleotide biosynthesis pathway. This is Aspartate carbamoyltransferase catalytic subunit from Ruminiclostridium cellulolyticum (strain ATCC 35319 / DSM 5812 / JCM 6584 / H10) (Clostridium cellulolyticum).